A 170-amino-acid polypeptide reads, in one-letter code: 4-hydroxyphenylacetate 3-monooxygenase reductase component (170 aa).

It belongs to the non-flavoprotein flavin reductase family. HpaC subfamily. In terms of assembly, homodimer. 4-HPA 3-monooxygenase consists of a reductase component HpaC and an oxygenase component HpaB.

The enzyme catalyses a reduced flavin + NAD(+) = an oxidized flavin + NADH + 2 H(+). The protein operates within aromatic compound metabolism; 4-hydroxyphenylacetate degradation; pyruvate and succinate semialdehyde from 4-hydroxyphenylacetate: step 1/7. Functionally, catalyzes the reduction of free flavins (FMN, FAD and riboflavin) by NADH. Subsequently, the reduced flavins diffuse to the large HpaB component or to other electron acceptors such as cytochrome c and Fe(3+) ion. The sequence is that of 4-hydroxyphenylacetate 3-monooxygenase reductase component (hpaC) from Escherichia coli.